The chain runs to 273 residues: Non-homologous end joining protein Ku (273 aa).

Residues 10–193 form the Ku domain; that stretch reads AFGLVNVPVK…KVEIKPAELK (184 aa). The interval 111 to 273 is sufficient for interaction with LigD; sequence FLEPDSKSSK…KANSNVPTPP (163 aa).

The protein belongs to the prokaryotic Ku family. In terms of assembly, homodimer. Interacts with LigD.

With LigD forms a non-homologous end joining (NHEJ) DNA repair enzyme, which repairs dsDNA breaks with reduced fidelity. Binds linear dsDNA with 5'- and 3'- overhangs but not closed circular dsDNA nor ssDNA. Recruits and stimulates the ligase activity of LigD. The sequence is that of Non-homologous end joining protein Ku (mku) from Mycobacterium tuberculosis (strain CDC 1551 / Oshkosh).